The primary structure comprises 225 residues: Heptaprenylglyceryl phosphate synthase (225 aa).

Lysine 6 provides a ligand contact to sn-glycerol 1-phosphate. Residues aspartate 8 and threonine 34 each coordinate Mg(2+). Residues 153–158 (YVEYSG), glycine 183, and 203–204 (GN) each bind sn-glycerol 1-phosphate.

This sequence belongs to the GGGP/HepGP synthase family. Group I subfamily. In terms of assembly, homodimer. Mg(2+) is required as a cofactor.

The catalysed reaction is sn-glycerol 1-phosphate + all-trans-heptaprenyl diphosphate = 3-heptaprenyl-sn-glycero-1-phosphate + diphosphate. It functions in the pathway membrane lipid metabolism; glycerophospholipid metabolism. Prenyltransferase that catalyzes in vivo the transfer of the heptaprenyl moiety of heptaprenyl pyrophosphate (HepPP; 35 carbon atoms) to the C3 hydroxyl of sn-glycerol-1-phosphate (G1P), producing heptaprenylglyceryl phosphate (HepGP). This reaction is an ether-bond-formation step in the biosynthesis of archaea-type G1P-based membrane lipids found in Bacillales. The polypeptide is Heptaprenylglyceryl phosphate synthase (Listeria innocua serovar 6a (strain ATCC BAA-680 / CLIP 11262)).